We begin with the raw amino-acid sequence, 504 residues long: Pyruvate kinase (504 aa).

Residue Arg-53 coordinates substrate. Residues Asn-55, Ser-57, Asp-88, and Thr-89 each contribute to the K(+) site. Residue Asn-55–His-58 participates in ATP binding. The ATP site is built by Arg-95 and Lys-181. Residue Glu-246 participates in Mg(2+) binding. Substrate contacts are provided by Gly-269, Asp-270, and Thr-302. Residue Asp-270 coordinates Mg(2+).

It belongs to the pyruvate kinase family. Homotetramer. It depends on Mg(2+) as a cofactor. Requires K(+) as cofactor.

It carries out the reaction pyruvate + ATP = phosphoenolpyruvate + ADP + H(+). Its pathway is carbohydrate degradation; glycolysis; pyruvate from D-glyceraldehyde 3-phosphate: step 5/5. The sequence is that of Pyruvate kinase (PYK1) from Debaryomyces hansenii (strain ATCC 36239 / CBS 767 / BCRC 21394 / JCM 1990 / NBRC 0083 / IGC 2968) (Yeast).